Here is a 337-residue protein sequence, read N- to C-terminus: Probable uridine nucleosidase 2 (337 aa).

Residue His-260 is part of the active site.

Belongs to the IUNH family.

It is found in the cytoplasm. It catalyses the reaction uridine + H2O = D-ribose + uracil. Involved in pyrimidine breakdown. The protein is Probable uridine nucleosidase 2 (URH2) of Oryza sativa subsp. japonica (Rice).